A 221-amino-acid polypeptide reads, in one-letter code: uncharacterized protein (221 aa).

Helical transmembrane passes span 2 to 22 (FIAK…FFFV), 34 to 54 (LLTL…LAQA), 97 to 117 (AYGL…SNVI), 131 to 151 (ALDQ…FMGI), and 177 to 197 (ILWP…LQVI).

Belongs to the peroxisomal membrane protein PXMP2/4 family.

The protein resides in the membrane. This is an uncharacterized protein from Schizosaccharomyces pombe (strain 972 / ATCC 24843) (Fission yeast).